Consider the following 77-residue polypeptide: Large ribosomal subunit protein bL28 (77 aa).

Belongs to the bacterial ribosomal protein bL28 family.

This chain is Large ribosomal subunit protein bL28, found in Cupriavidus necator (strain ATCC 17699 / DSM 428 / KCTC 22496 / NCIMB 10442 / H16 / Stanier 337) (Ralstonia eutropha).